Consider the following 382-residue polypeptide: GDP-mannose 4,6 dehydratase 2 (382 aa).

Residues 40 to 45, 97 to 98, 119 to 123, and Y134 contribute to the NADP(+) site; these read GITGQD, DM, and LAAQS. T166 is an active-site residue. Catalysis depends on nucleophile residues E168 and Y190. NADP(+)-binding residues include K194, H220, and R225.

It belongs to the NAD(P)-dependent epimerase/dehydratase family. GDP-mannose 4,6-dehydratase subfamily. The cofactor is NADP(+).

It catalyses the reaction GDP-alpha-D-mannose = GDP-4-dehydro-alpha-D-rhamnose + H2O. Its pathway is nucleotide-sugar biosynthesis; GDP-L-fucose biosynthesis via de novo pathway; GDP-L-fucose from GDP-alpha-D-mannose: step 1/2. Catalyzes the conversion of GDP-D-mannose to GDP-4-dehydro-6-deoxy-D-mannose. The chain is GDP-mannose 4,6 dehydratase 2 (gmd-2) from Caenorhabditis elegans.